A 385-amino-acid chain; its full sequence is Protein hunchback (385 aa).

Disordered regions lie at residues 1–94 and 124–216; these read IGGI…YDAM and ESRA…PGLR. Positions 63 to 77 are enriched in low complexity; the sequence is SASPSSSSKDSNGHS. Composition is skewed to basic and acidic residues over residues 126-135 and 173-203; these read RASDARDHSP and PERRSFDRFHDSGFDGVDHNKHDGDDGREGS. 4 C2H2-type zinc fingers span residues 229 to 251, 258 to 280, 286 to 308, and 314 to 338; these read FKCKQCEFVAVTKLSFWEHSKEH, LCCRKCPFVTEYKHHLEYHMRNH, FQCSQCSYSCVNKSMLNSHLKSH, and YRCADCNYATKYCDSLKLHLRKYQH. Positions 361–385 are disordered; it reads TRRGPKQKPLSKIFEQQTGTNNHSP. Polar residues predominate over residues 374–385; that stretch reads FEQQTGTNNHSP.

Belongs to the hunchback C2H2-type zinc-finger protein family.

The protein resides in the nucleus. Functionally, gap class segmentation protein that controls development of head structures. The polypeptide is Protein hunchback (hb) (Bombyx mori (Silk moth)).